The primary structure comprises 173 residues: Flavodoxin 2 (173 aa).

In terms of domain architecture, Flavodoxin-like spans 3-165; that stretch reads MGLFYGSSTC…RIQSWCEQIL (163 aa).

The protein belongs to the flavodoxin family. Requires FMN as cofactor.

Functionally, low-potential electron donor to a number of redox enzymes. The protein is Flavodoxin 2 (fldB) of Escherichia coli O157:H7.